Reading from the N-terminus, the 437-residue chain is Xylose isomerase (437 aa).

Active-site residues include His-102 and Asp-105. Positions 233, 269, 272, 297, 308, 310, and 340 each coordinate Mg(2+).

Belongs to the xylose isomerase family. As to quaternary structure, homotetramer. It depends on Mg(2+) as a cofactor.

The protein resides in the cytoplasm. It catalyses the reaction alpha-D-xylose = alpha-D-xylulofuranose. In Novosphingobium aromaticivorans (strain ATCC 700278 / DSM 12444 / CCUG 56034 / CIP 105152 / NBRC 16084 / F199), this protein is Xylose isomerase.